A 122-amino-acid chain; its full sequence is Double-headed protease inhibitor, submandibular gland (122 aa).

Kazal-like domains lie at 10–70 (GGRK…ECDI) and 71–121 (ECTQ…QCQS). 6 cysteine pairs are disulfide-bonded: C16–C50, C28–C47, C36–C68, C72–C101, C79–C98, and C87–C119.

It is found in the secreted. This inhibitor is composed of two homologous actively inhibiting halves: one which inhibits trypsin, the other which inhibits elastase. This Panthera uncia (Snow leopard) protein is Double-headed protease inhibitor, submandibular gland.